Reading from the N-terminus, the 418-residue chain is Glutamyl-tRNA reductase (418 aa).

Substrate contacts are provided by residues 49–52 (TCNR), S108, 113–115 (EPQ), and Q119. The Nucleophile role is filled by C50. 188-193 (GAGETI) provides a ligand contact to NADP(+).

The protein belongs to the glutamyl-tRNA reductase family. In terms of assembly, homodimer.

It carries out the reaction (S)-4-amino-5-oxopentanoate + tRNA(Glu) + NADP(+) = L-glutamyl-tRNA(Glu) + NADPH + H(+). The protein operates within porphyrin-containing compound metabolism; protoporphyrin-IX biosynthesis; 5-aminolevulinate from L-glutamyl-tRNA(Glu): step 1/2. In terms of biological role, catalyzes the NADPH-dependent reduction of glutamyl-tRNA(Glu) to glutamate 1-semialdehyde (GSA). The polypeptide is Glutamyl-tRNA reductase (Aliivibrio salmonicida (strain LFI1238) (Vibrio salmonicida (strain LFI1238))).